Reading from the N-terminus, the 919-residue chain is Protein phosphatase 1 regulatory subunit 37 (919 aa).

LRR repeat units lie at residues 340-361 (SLQYLDARNTPLLDHSAPFVAR), 368-388 (SLTVLHLENSGISGRPLMLLA), 396-417 (NLRELYLAENKLNGLQDSAQLG), 425-445 (NIQILDLRNNHILDSGLAYVC), 454-474 (GLVTLVLWNNQLTHNGMGYLA), and 482-502 (SLETLNLGHNAVGNEGVHKLK). Disordered stretches follow at residues 626–716 (ATED…TIPS) and 790–866 (APSQ…APLP). The segment covering 631-640 (THEEEEEEEA) has biased composition (acidic residues). The span at 641–658 (SPLKKIEEETTDALKDAT) shows a compositional bias: basic and acidic residues. The span at 677 to 690 (PQDDSDSDTEDEET) shows a compositional bias: acidic residues. A compositionally biased stretch (low complexity) spans 691–701 (PTNTSLTSTSP). 2 stretches are compositionally biased toward polar residues: residues 791-801 (PSQTQNSTQPT) and 811-837 (DAQQEDSVSTSTPSLDANIDQTQLTES). Residues 833–861 (QLTESVSEEEQKKAETLNNEADINEDANT) are a coiled coil.

The protein belongs to the PPP1R37 family.

May inhibit phosphatase activity of protein phosphatase 1 (PP1) complexes. The sequence is that of Protein phosphatase 1 regulatory subunit 37 (ppp1r37) from Danio rerio (Zebrafish).